A 182-amino-acid chain; its full sequence is Large ribosomal subunit protein uL6 (182 aa).

Belongs to the universal ribosomal protein uL6 family. As to quaternary structure, part of the 50S ribosomal subunit.

Its function is as follows. This protein binds to the 23S rRNA, and is important in its secondary structure. It is located near the subunit interface in the base of the L7/L12 stalk, and near the tRNA binding site of the peptidyltransferase center. This is Large ribosomal subunit protein uL6 from Methanococcus maripaludis (strain C7 / ATCC BAA-1331).